The primary structure comprises 1043 residues: Isoleucine--tRNA ligase (1043 aa).

2 residues coordinate L-isoleucyl-5'-AMP: proline 46 and histidine 57. A 'HIGH' region motif is present at residues 47 to 57 (PTANGLPHVGH). Positions 181 and 184 each coordinate Zn(2+). L-valine contacts are provided by histidine 319 and aspartate 328. Residues cysteine 389, cysteine 392, cysteine 461, cysteine 464, cysteine 502, and cysteine 504 each contribute to the Zn(2+) site. 5 residues coordinate L-isoleucyl-5'-AMP: glutamate 550, glycine 551, aspartate 553, glutamine 554, and histidine 581. Residues 591-595 (KMSKS) carry the 'KMSKS' region motif. Lysine 594 is an ATP binding site.

The protein belongs to the class-I aminoacyl-tRNA synthetase family. IleS type 2 subfamily. Monomer. Zn(2+) is required as a cofactor.

It localises to the cytoplasm. It catalyses the reaction tRNA(Ile) + L-isoleucine + ATP = L-isoleucyl-tRNA(Ile) + AMP + diphosphate. Functionally, catalyzes the attachment of isoleucine to tRNA(Ile). As IleRS can inadvertently accommodate and process structurally similar amino acids such as valine, to avoid such errors it has two additional distinct tRNA(Ile)-dependent editing activities. One activity is designated as 'pretransfer' editing and involves the hydrolysis of activated Val-AMP. The other activity is designated 'posttransfer' editing and involves deacylation of mischarged Val-tRNA(Ile). This is Isoleucine--tRNA ligase (ileS) from Thermus thermophilus (strain ATCC 27634 / DSM 579 / HB8).